The sequence spans 427 residues: Glutamyl-tRNA reductase (427 aa).

Substrate is bound by residues 48–51 (TCNR), Ser-99, 104–106 (EDQ), and Gln-110. The active-site Nucleophile is the Cys-49. An NADP(+)-binding site is contributed by 179–184 (GAGEMG).

Belongs to the glutamyl-tRNA reductase family. As to quaternary structure, homodimer.

The enzyme catalyses (S)-4-amino-5-oxopentanoate + tRNA(Glu) + NADP(+) = L-glutamyl-tRNA(Glu) + NADPH + H(+). It functions in the pathway porphyrin-containing compound metabolism; protoporphyrin-IX biosynthesis; 5-aminolevulinate from L-glutamyl-tRNA(Glu): step 1/2. Functionally, catalyzes the NADPH-dependent reduction of glutamyl-tRNA(Glu) to glutamate 1-semialdehyde (GSA). In Methanocella arvoryzae (strain DSM 22066 / NBRC 105507 / MRE50), this protein is Glutamyl-tRNA reductase.